Reading from the N-terminus, the 354-residue chain is Bergaptol O-methyltransferase (354 aa).

Residue histidine 121 participates in bergaptol binding. The S-adenosyl-L-homocysteine site is built by serine 174, glycine 198, aspartate 221, and lysine 255. Histidine 259 is a binding site for bergaptol. The active-site Proton acceptor is histidine 259.

This sequence belongs to the class I-like SAM-binding methyltransferase superfamily. Cation-independent O-methyltransferase family. COMT subfamily.

The catalysed reaction is a 5-hydroxyfurocoumarin + S-adenosyl-L-methionine = a 5-methoxyfurocoumarin + S-adenosyl-L-homocysteine + H(+). It catalyses the reaction bergaptol + S-adenosyl-L-methionine = bergapten + S-adenosyl-L-homocysteine. Its activity is regulated as follows. Inhibited by Cu(2+), Ni(2+) and Co(2+). The polypeptide is Bergaptol O-methyltransferase (Ammi majus (Bishop's weed)).